A 279-amino-acid chain; its full sequence is S-formylglutathione hydrolase (279 aa).

Residues serine 150, aspartate 226, and histidine 258 each act as charge relay system in the active site.

This sequence belongs to the esterase D family.

The enzyme catalyses S-formylglutathione + H2O = formate + glutathione + H(+). Functionally, serine hydrolase involved in the detoxification of formaldehyde. Hydrolyzes S-formylglutathione to glutathione and formate. The sequence is that of S-formylglutathione hydrolase (fghA) from Paracoccus denitrificans (strain Pd 1222).